We begin with the raw amino-acid sequence, 110 residues long: Large ribosomal subunit protein uL22 (110 aa).

It belongs to the universal ribosomal protein uL22 family. In terms of assembly, part of the 50S ribosomal subunit.

Its function is as follows. This protein binds specifically to 23S rRNA; its binding is stimulated by other ribosomal proteins, e.g. L4, L17, and L20. It is important during the early stages of 50S assembly. It makes multiple contacts with different domains of the 23S rRNA in the assembled 50S subunit and ribosome. The globular domain of the protein is located near the polypeptide exit tunnel on the outside of the subunit, while an extended beta-hairpin is found that lines the wall of the exit tunnel in the center of the 70S ribosome. This is Large ribosomal subunit protein uL22 from Alkaliphilus oremlandii (strain OhILAs) (Clostridium oremlandii (strain OhILAs)).